The sequence spans 321 residues: MTEARPVATERAYPALSREYPADFRVDDSYKASLPDLQNGPASLIVGARAPIQHVGISNFRLPIRYQTQEGGEIALETSVTGTVSLEADRKGINMSRIMRSFYAHAEKQFSMGVLEAALEDYKSDLGSFDARIMMRLSYPMRVESLRSGLSGWQYYDIALELSERAGQRLRIMHFDYVYSSTCPCSLELAEHARQMRGQLATPHSQRSIARISVVMQGDTLWFEDMVTLCRRAVATETQVMVKREDEQAFAELNAANPIFVEDAVRAFAAELMAEPRIGDFRVVASHQESLHSHDAVSVLTQGETFAHASLDPAIFAGLRA.

This sequence belongs to the GTP cyclohydrolase IV family.

It carries out the reaction GTP + H2O = 7,8-dihydroneopterin 3'-triphosphate + formate + H(+). The protein operates within cofactor biosynthesis; 7,8-dihydroneopterin triphosphate biosynthesis; 7,8-dihydroneopterin triphosphate from GTP: step 1/1. Its function is as follows. Converts GTP to 7,8-dihydroneopterin triphosphate. The sequence is that of GTP cyclohydrolase FolE2 from Paracoccus denitrificans (strain Pd 1222).